The chain runs to 543 residues: Aspartate/alanine antiporter (543 aa).

Helical transmembrane passes span 4 to 26 (IGNF…GYLL), 33 to 55 (SFTL…LGVF), 88 to 110 (FGAK…AYAC), 117 to 139 (GPGI…GSSL), 159 to 178 (IPIV…LIFL), 362 to 381 (IINY…LGIV), 385 to 407 (VSGV…VQSI), 428 to 450 (SIGL…ISAI), 455 to 477 (ISVL…VICY), and 520 to 542 (VAPA…IVLL).

It belongs to the AAE transporter (TC 2.A.81) family.

The protein localises to the cell membrane. In terms of biological role, catalyzes the electrogenic exchange of aspartate with alanine. The polypeptide is Aspartate/alanine antiporter (aspT) (Tetragenococcus halophilus (Pediococcus halophilus)).